A 484-amino-acid chain; its full sequence is Bifunctional protein GlmU (484 aa).

Residues 1–240 form a pyrophosphorylase region; sequence MSASRPAAVM…RTEVEGVNDR (240 aa). Residues 12–15, lysine 26, glutamine 79, and 84–85 each bind UDP-N-acetyl-alpha-D-glucosamine; these read LAAG and GT. Aspartate 113 is a binding site for Mg(2+). Residues glycine 150, glutamate 165, asparagine 180, and asparagine 238 each coordinate UDP-N-acetyl-alpha-D-glucosamine. Asparagine 238 lines the Mg(2+) pocket. Residues 241–261 are linker; it reads VQLAEARRLLNARLLEQLMRD. The segment at 262–484 is N-acetyltransferase; the sequence is GVTVVDPAST…RARARSEEDR (223 aa). Residues arginine 343 and lysine 361 each coordinate UDP-N-acetyl-alpha-D-glucosamine. The active-site Proton acceptor is the histidine 373. Tyrosine 376 and asparagine 387 together coordinate UDP-N-acetyl-alpha-D-glucosamine. Acetyl-CoA is bound by residues alanine 390, 396–397, serine 415, and alanine 433; that span reads NY. Residues 457 to 484 form a disordered region; sequence EGWVERKRPGTPAAQAAERARARSEEDR. The segment covering 474 to 484 has biased composition (basic and acidic residues); sequence ERARARSEEDR.

This sequence in the N-terminal section; belongs to the N-acetylglucosamine-1-phosphate uridyltransferase family. It in the C-terminal section; belongs to the transferase hexapeptide repeat family. As to quaternary structure, homotrimer. Mg(2+) is required as a cofactor.

The protein resides in the cytoplasm. The catalysed reaction is alpha-D-glucosamine 1-phosphate + acetyl-CoA = N-acetyl-alpha-D-glucosamine 1-phosphate + CoA + H(+). The enzyme catalyses N-acetyl-alpha-D-glucosamine 1-phosphate + UTP + H(+) = UDP-N-acetyl-alpha-D-glucosamine + diphosphate. It functions in the pathway nucleotide-sugar biosynthesis; UDP-N-acetyl-alpha-D-glucosamine biosynthesis; N-acetyl-alpha-D-glucosamine 1-phosphate from alpha-D-glucosamine 6-phosphate (route II): step 2/2. It participates in nucleotide-sugar biosynthesis; UDP-N-acetyl-alpha-D-glucosamine biosynthesis; UDP-N-acetyl-alpha-D-glucosamine from N-acetyl-alpha-D-glucosamine 1-phosphate: step 1/1. Its pathway is bacterial outer membrane biogenesis; LPS lipid A biosynthesis. Functionally, catalyzes the last two sequential reactions in the de novo biosynthetic pathway for UDP-N-acetylglucosamine (UDP-GlcNAc). The C-terminal domain catalyzes the transfer of acetyl group from acetyl coenzyme A to glucosamine-1-phosphate (GlcN-1-P) to produce N-acetylglucosamine-1-phosphate (GlcNAc-1-P), which is converted into UDP-GlcNAc by the transfer of uridine 5-monophosphate (from uridine 5-triphosphate), a reaction catalyzed by the N-terminal domain. This chain is Bifunctional protein GlmU, found in Thermobifida fusca (strain YX).